The sequence spans 81 residues: CLAVATA3/ESR (CLE)-related protein 12 (81 aa).

A signal peptide spans 1–31 (MENSNKVPISKIGLIMLMIFSTFFMSPHARR). Residues 55 to 67 (KRSRTDLEDKAVP) are compositionally biased toward basic and acidic residues. A disordered region spans residues 55–81 (KRSRTDLEDKAVPGDRLSPGGPNHIHN). 2 positions are modified to hydroxyproline: P73 and P76. The O-linked (Ara...) hydroxyproline glycan is linked to P76.

It belongs to the CLV3/ESR signal peptide family. In terms of processing, the O-glycosylation (arabinosylation) of the hydroxyproline Pro-76 enhances binding affinity of the CLE12p peptide for its receptor. In terms of tissue distribution, expressed in young nodules throughout the central tissue. Expressed in the apical region of elongated nodules, corresponding to the meristematic and early infection zones.

The protein resides in the secreted. The protein localises to the extracellular space. Signaling peptide involved in the regulation of nodulation. Moves from root to shoot to function with the receptor kinase SUNN, in a signaling pathway that plays roles during cellular differentiation, both at the onset of nodulation, and later during nodule meristem development and subsequent homeostasis. Interacts with SUNN signaling to control nodule numbers. SUNN is involved in the autoregulation of nodulation (AON), a long distance systemic signaling from root to shoot and back again, which allows legumes to limit the number of root nodules formed based on available nitrogen and previous rhizobial colonization. This Medicago truncatula (Barrel medic) protein is CLAVATA3/ESR (CLE)-related protein 12.